Reading from the N-terminus, the 249-residue chain is Low affinity immunoglobulin gamma Fc region receptor III-A (249 aa).

Positions M1–A20 are cleaved as a signal peptide. At G21–Q203 the chain is on the extracellular side. Ig-like C2-type domains are found at residues P31–V103 and F117–S188. Disulfide bonds link C46–C88 and C127–C171. N55 and N62 each carry an N-linked (GlcNAc...) asparagine glycan. N179 is a glycosylation site (N-linked (GlcNAc...) asparagine). The chain crosses the membrane as a helical span at residues I204 to V224. Over Q225–K249 the chain is Cytoplasmic. The residue at position 235 (Y235) is a Phosphotyrosine.

Forms a heterooligomeric complex with ITAM-containing signaling subunits FCER1G. Interacts (via transmembrane domain) with signaling subunits; this interaction is a prerequisite for receptor complex expression on the cell surface and intracellular signal transduction. Binds the Fc region of antigen-complexed IgG. In terms of processing, N-glycosylated. Post-translationally, phosphorylated following receptor ligation.

The protein localises to the cell membrane. Functionally, receptor for the invariable Fc fragment of immunoglobulin gamma (IgG). Binds with intermediate affinity to both IgG2a and IgG2b. Can bind to IgG2a and IgG2b monomers. Does not display binding to IgG1 or IgG3. Recognizes neutralizing virus-specific IgGs displayed on the cell surface of infected cells and triggers antibody-dependent cellular cytotoxicity (ADCC). Confers protection to lethal influenza virus infection. On splenic dendritic cells, uptakes antigen immune complexes and efficiently divert them into MHC class I and II antigen presentation pathways to provide for superior priming of CD4-positive and CD8-positive T cell immune responses. Mediates neutrophil activation by IgG complexes redundantly with FCGR2A. Plays a role in promoting bone resorption by enhancing osteoclast differentiation following binding to IgG2a. Also acts as a receptor for the Fc region of immunoglobulin epsilon (IgE). Binds with low affinity to both the a and b allotypes of IgE. Has also been shown to bind to IgE allotype a only but not to allotype b. Binds aggregated IgE but not the monomeric form and bound monomeric IgG is readily displaced by IgE complexes. Binding to IgE promotes macrophage-mediated phagocytosis, antigen presentation to T cells, production of pro-inflammatory cytokines and the late phase of cutaneous allergic reactions. Mediates enhanced ADCC in response to afucosylated IgGs. The polypeptide is Low affinity immunoglobulin gamma Fc region receptor III-A (Rattus norvegicus (Rat)).